The chain runs to 593 residues: Thiol:disulfide interchange protein DsbD (593 aa).

The signal sequence occupies residues methionine 1–alanine 21. Cystine bridges form between cysteine 130–cysteine 136 and cysteine 207–cysteine 328. Transmembrane regions (helical) follow at residues leucine 193–leucine 215, leucine 235–leucine 257, leucine 269–leucine 291, glycine 318–valine 340, leucine 347–valine 369, arginine 384–leucine 401, methionine 408–leucine 425, and serine 440–phenylalanine 462. Residues phenylalanine 451–asparagine 593 form the Thioredoxin domain. Residues cysteine 508 and cysteine 511 are joined by a disulfide bond.

The protein belongs to the thioredoxin family. DsbD subfamily.

The protein resides in the cell inner membrane. It carries out the reaction [protein]-dithiol + NAD(+) = [protein]-disulfide + NADH + H(+). The catalysed reaction is [protein]-dithiol + NADP(+) = [protein]-disulfide + NADPH + H(+). Its function is as follows. Required to facilitate the formation of correct disulfide bonds in some periplasmic proteins and for the assembly of the periplasmic c-type cytochromes. Acts by transferring electrons from cytoplasmic thioredoxin to the periplasm. This transfer involves a cascade of disulfide bond formation and reduction steps. The sequence is that of Thiol:disulfide interchange protein DsbD from Vibrio vulnificus (strain CMCP6).